The following is a 478-amino-acid chain: 3-ketoacyl-CoA synthase 3 (478 aa).

The N-terminal stretch at 1-25 (MDLLVMLLSLLVSYLIFKIWKRIDS) is a signal peptide. Residues 26 to 313 (KRDQNCYILD…FMLCLLLKKL (288 aa)) enclose the FAE domain. Active-site residues include Cys168, His247, His345, His349, His378, and Asn382.

The protein belongs to the thiolase-like superfamily. Chalcone/stilbene synthases family. As to expression, expressed in siliques, leaves, stems and seedlings.

It is found in the endoplasmic reticulum. The catalysed reaction is a very-long-chain acyl-CoA + malonyl-CoA + H(+) = a very-long-chain 3-oxoacyl-CoA + CO2 + CoA. Its pathway is lipid metabolism; fatty acid biosynthesis. The chain is 3-ketoacyl-CoA synthase 3 from Arabidopsis thaliana (Mouse-ear cress).